Here is a 5478-residue protein sequence, read N- to C-terminus: Mucin-12 (5478 aa).

Residues 1–16 (MLVIWILTLALRLCAS) form the signal peptide. At 17–5380 (VTTVTPEGSA…EFNIAKSLVY (5364 aa)) the chain is on the extracellular side. N-linked (GlcNAc...) asparagine glycosylation is found at N154, N170, and N176. Residues 212-737 (LDSSTNSGHS…GSTETTLLPD (526 aa)) form a disordered region. Repeat unit 1 spans residues 222–240 (EESTVSHSGPGATGTTLFP). Residues 222–4761 (EESTVSHSGP…PGSTQTMHFP (4540 aa)) form a 28 X 19 AA approximate tandem repeats of E-E-S-X-X-X-H-X-X-P-X-X-T-X-T-X-X-X-P region. Polar residues-rich tracts occupy residues 226-246 (VSHS…SATS), 255-288 (SPIT…SSPR), 296-313 (PART…TSHS), and 325-342 (DSTT…SHSI). Residues 343 to 366 (PGSTDTTLSPGTTTPSSLGPESTT) are compositionally biased toward low complexity. A compositionally biased stretch (polar residues) spans 367-387 (FHSSPGYTKTTRLPDNTTTSG). N382 carries N-linked (GlcNAc...) asparagine glycosylation. Over residues 396 to 413 (HSSTGSPHTTLSPSSSTT) the composition is skewed to low complexity. Polar residues predominate over residues 419-440 (TTFQSWPSSKDTSPAPSGTTSA). Composition is skewed to low complexity over residues 445–466 (STTY…SSTT) and 478–495 (SSPV…SATS). 2 tandem repeats follow at residues 471 to 489 (EEST…TPPP) and 499 to 517 (EEST…MHFP). Residues 531-554 (TFHGSTTHTKSSTPSTTAALAHTS) are compositionally biased toward low complexity. Composition is skewed to polar residues over residues 555 to 575 (YHSS…TISG) and 608 to 648 (STPS…SPDT). Residues 654–669 (SMTSSGVSEESTTSHS) show a composition bias toward low complexity. Copy 4 of the repeat occupies 662–680 (EESTTSHSRPGSTHTTAFP). 2 stretches are compositionally biased toward polar residues: residues 670 to 715 (RPGS…TASS) and 722 to 737 (TFHS…LLPD). N738 carries N-linked (GlcNAc...) asparagine glycosylation. Disordered stretches follow at residues 749 to 4847 (MPVH…HFTT), 4887 to 5034 (SSRS…THTV), 5048 to 5071 (STAF…TASD), and 5093 to 5112 (ASSS…TSPS). Composition is skewed to polar residues over residues 751–783 (VHSS…WPSS) and 792–842 (TTTS…TQTM). Repeat 5 spans residues 827 to 845 (EESTTYHSSPGSTQTMHFP). Residues 859–877 (TSHSSTTHTISSAPSTTSA) show a composition bias toward low complexity. 2 stretches are compositionally biased toward polar residues: residues 884–899 (SYHS…HFPD) and 928–970 (RSTT…TTFH). A compositionally biased stretch (low complexity) spans 971–1007 (SSPRSPATTLSPASTTSSGVSEESTTSRSRPGSTHTT). Residues 1009–1021 (FPDSTTTPGLSRH) are compositionally biased toward polar residues. Low complexity predominate over residues 1022 to 1065 (STTSHSSPGSTDTTLLPASTTTSGPSQESTTSHSSSGSTDTALS). 2 stretches are compositionally biased toward polar residues: residues 1066–1101 (PGST…TSSG) and 1108–1138 (RVHS…TAFQ). Low complexity predominate over residues 1139–1157 (THPASTHTTPSPPSTATAP). Repeat unit 6 spans residues 1159 to 1177 (EESTTYHRSPGSTPTTHFP). Polar residues-rich tracts occupy residues 1160-1184 (ESTT…TTSG) and 1191-1207 (IFHS…SSAH). Composition is skewed to low complexity over residues 1208-1220 (STTS…TTSR), 1229-1241 (TTLP…PGLS), and 1249-1262 (SSPR…SPAS). Polar residues-rich tracts occupy residues 1271–1324 (ESTT…TTSV), 1331–1357 (TFHS…TEES), and 1364–1377 (PAST…TLTT). Composition is skewed to low complexity over residues 1384–1396 (STTF…STGT) and 1411–1438 (ESTP…SLSE). The span at 1439 to 1448 (KSTTFYTSPR) shows a compositional bias: polar residues. Positions 1458–1481 (TTTSSGVSEESSTSHSQPGSTHTT) are enriched in low complexity. Copy 7 of the repeat occupies 1466-1484 (EESSTSHSQPGSTHTTAFP). Over residues 1483–1537 (FPDSTTTSDLSQEPTTSHSSQGSTEATLSPGSTTASSLGQQSTTFHSSPGDTETT) the composition is skewed to polar residues. Low complexity predominate over residues 1552-1568 (STPTHSSTGSLHTTLTP). 2 stretches are compositionally biased toward polar residues: residues 1569 to 1586 (ASST…FQSW) and 1606 to 1630 (VSTT…TTLG). Repeat unit 8 spans residues 1633–1651 (EESTTVHSSPGATGTALFP). The segment covering 1653–1708 (RSATSVLVGEPTTSPISSGSTETTALPGSTTTAGLSEKSTTFYSSPRSPDTTLSPA) has biased composition (polar residues). Over residues 1709–1724 (STTSSGVSEESTTSHS) the composition is skewed to low complexity. Repeat unit 9 spans residues 1717-1735 (EESTTSHSRPGSTHTTAFP). Polar residues-rich tracts occupy residues 1725 to 1797 (RPGS…TTAS) and 1805 to 1840 (PVHS…SSKD). N-linked (GlcNAc...) asparagine glycosylation is present at N1793. 2 stretches are compositionally biased toward low complexity: residues 1856 to 1877 (STTS…SSTT) and 1889 to 1906 (SSPV…STTS). Repeat copies occupy residues 1882–1900 (EEST…TPSP) and 1910–1928 (EEST…MHFP). Polar residues predominate over residues 1914 to 1935 (AYHSSPGSTQTMHFPESSTASG). Residues 1943 to 1959 (SHSSTTHTISSPPSTTS) show a composition bias toward low complexity. Polar residues-rich tracts occupy residues 1967 to 1982 (SYHS…HFPD) and 2011 to 2053 (RSTT…TTFH). Residues 2054–2082 (SSPRSPATTLSPASTTSSGVSEESTTSHS) are compositionally biased toward low complexity. Repeat unit 12 spans residues 2075 to 2093 (EESTTSHSRPGSTHTTAFP). The span at 2083-2104 (RPGSTHTTAFPDSTTTPGLSRH) shows a compositional bias: polar residues. Low complexity predominate over residues 2105–2130 (STTSHSSPGSTDTTLLPASTTTSGPS). Polar residues-rich tracts occupy residues 2131–2184 (QEST…TSSG) and 2191–2221 (RVHS…TAFQ). Residues 2222–2240 (THPASTHTTPSPPSTATAP) show a composition bias toward low complexity. The stretch at 2242–2260 (EESTTYHRSPGSTPTTHFP) is repeat 13. Polar residues-rich tracts occupy residues 2243–2267 (ESTT…TTSG) and 2274–2290 (IFHS…SSAH). Composition is skewed to low complexity over residues 2291 to 2303 (STTS…TTSR), 2312 to 2324 (TTLP…PGLS), and 2332 to 2345 (SSPR…SPAS). Residues 2354 to 2392 (ESTTSRSQPGSTHSTVSPASTTTPGLSEESTTVYSSSPG) show a composition bias toward polar residues. Residues 2393 to 2407 (STETTVFPRTPTTSV) are compositionally biased toward low complexity. Composition is skewed to polar residues over residues 2414–2440 (TFHS…TEES) and 2447–2460 (PAST…TLTT). Composition is skewed to low complexity over residues 2467-2483 (STTF…TLSP) and 2494-2521 (ESTP…SLSE). Residues 2522 to 2531 (KSTTFYTSPR) are compositionally biased toward polar residues. Residues 2541-2564 (TTTSSGVSEESSTSHSQPGSTHTT) are compositionally biased toward low complexity. Copy 14 of the repeat occupies 2549–2567 (EESSTSHSQPGSTHTTAFP). Residues 2566-2578 (FPDSTTTPGLSRH) show a composition bias toward polar residues. The segment covering 2579–2604 (STTSHSSPGSTDTTLLPASTTTSGPS) has biased composition (low complexity). 2 stretches are compositionally biased toward polar residues: residues 2605–2658 (QEST…TSSG) and 2665–2695 (RVHS…TTFQ). Residues 2696-2714 (THPASTHTTPSPPSTATAP) show a composition bias toward low complexity. Copy 15 of the repeat occupies 2716-2734 (EESTTYHRSPGSTPTTHFP). 2 stretches are compositionally biased toward polar residues: residues 2717–2741 (ESTT…TTSG) and 2748–2764 (IFHS…SSAH). 3 stretches are compositionally biased toward low complexity: residues 2765–2777 (STTS…TTSR), 2786–2798 (TTLP…PGLS), and 2806–2819 (SSPR…SPAS). Composition is skewed to polar residues over residues 2828–2881 (ESTT…TTSV), 2888–2914 (TFHS…TEES), and 2921–2934 (PAST…TLTT). Composition is skewed to low complexity over residues 2941–2957 (STTF…TLSP) and 2968–2995 (ESTP…SLSE). Polar residues predominate over residues 2996–3005 (KSTTFYTSPR). Residues 3015–3038 (TTTSSGVSEESSTSHSQPGSTHTT) show a composition bias toward low complexity. Repeat unit 16 spans residues 3023 to 3041 (EESSTSHSQPGSTHTTAFP). A compositionally biased stretch (polar residues) spans 3040–3094 (FPDSTTTSGLSQEPTASHSSQGSTEATLSPGSTTASSLGQQSTTFHSSPGDTETT). A compositionally biased stretch (low complexity) spans 3109–3125 (STPTHSSTGSLHTTLTP). 2 stretches are compositionally biased toward polar residues: residues 3126–3143 (ASST…FQSW) and 3163–3187 (VSTT…TTLG). Repeat unit 17 spans residues 3190-3208 (EESTTVHSSPGATGTALFP). A compositionally biased stretch (polar residues) spans 3210 to 3265 (RSATSVLVGEPTTSPISSGSTETTALPGSTTTAGLSEKSTTFYSSPRSPDTTLSPA). Residues 3266–3281 (STTSSGVSEESTTSHS) are compositionally biased toward low complexity. Copy 18 of the repeat occupies 3274–3292 (EESTTSHSRPGSTHTTAFP). 2 stretches are compositionally biased toward polar residues: residues 3282 to 3354 (RPGS…TTAS) and 3362 to 3397 (PVHS…NSKD). An N-linked (GlcNAc...) asparagine glycan is attached at N3350. 2 stretches are compositionally biased toward low complexity: residues 3413 to 3434 (STTS…SSTT) and 3446 to 3463 (SSPV…STTS). A run of 2 repeats spans residues 3439 to 3457 (EEST…TPSP) and 3467 to 3485 (EEST…MHFP). Positions 3468-3482 (ESTTYHSSPGSTQTM) are enriched in polar residues. The segment covering 3499 to 3517 (TSHSSTTHTISSAPSTTSA) has biased composition (low complexity). Composition is skewed to polar residues over residues 3524-3539 (SYHS…HFPD) and 3568-3610 (RSTT…TTFH). The segment covering 3611–3639 (SSPRSPATTLSPASTTSSGVSEESTTSHS) has biased composition (low complexity). Copy 21 of the repeat occupies 3632-3650 (EESTTSHSRPGSTHTTAFP). Residues 3640-3661 (RPGSTHTTAFPDSTTTPGLSRH) are compositionally biased toward polar residues. Residues 3662–3705 (STTSHSSPGSTDTTLLPASTTTSGSSQESTTSHSSSGSTDTALS) are compositionally biased toward low complexity. Composition is skewed to polar residues over residues 3706-3741 (PGST…TSSG) and 3748-3778 (RVHS…TAFQ). Residues 3779–3797 (THPASTHTTPSPPSTATAP) show a composition bias toward low complexity. Copy 22 of the repeat occupies 3799-3817 (EESTTYHRSPGSTPTTHFP). Composition is skewed to polar residues over residues 3800-3824 (ESTT…TTSG) and 3831-3847 (IFHS…SSAH). Composition is skewed to low complexity over residues 3848–3860 (STTS…TTSR), 3869–3881 (TTLP…PGLS), and 3889–3902 (SSPR…SPAS). Composition is skewed to polar residues over residues 3911–3963 (ESTT…TTTS), 3971–3997 (TFHS…TEES), and 4004–4017 (PAST…TLTT). 2 stretches are compositionally biased toward low complexity: residues 4024 to 4036 (STTF…STGT) and 4051 to 4078 (ESTP…SLSE). Residues 4079 to 4088 (KSTTFYTSPR) show a composition bias toward polar residues. Residues 4098–4121 (TTTSSGVSEESSTSHSQPGSTHTT) are compositionally biased toward low complexity. Repeat 23 spans residues 4106 to 4124 (EESSTSHSQPGSTHTTAFP). Positions 4123-4177 (FPDSTTTSGLSQEPTTSHSSQGSTEATLSPGSTTASSLGQQSTTFHSSPGDTETT) are enriched in polar residues. The segment covering 4192–4208 (STPTHSSTGSLHTTLTP) has biased composition (low complexity). A compositionally biased stretch (polar residues) spans 4209 to 4226 (ASSTSTGLQEESTTFQSW). Over residues 4227-4249 (PSSSDTTPSPPSTTAVPVEVSTT) the composition is skewed to low complexity. Polar residues predominate over residues 4250-4270 (YHSRPSSTPTTHFSASSTTLG). Copy 24 of the repeat occupies 4273–4291 (EESTTVHSSPGATGTALFP). Polar residues predominate over residues 4293 to 4348 (RSATSVLVGEPTTSPISSGSTETTALPGSTTTAGLSEKSTTFYSSPRSPDTTLSPA). Over residues 4349–4364 (STTSSGVSEESTTSHS) the composition is skewed to low complexity. Polar residues-rich tracts occupy residues 4369-4437 (MHTT…TTAS) and 4445-4480 (PVHS…NSKD). N4433 is a glycosylation site (N-linked (GlcNAc...) asparagine). 2 stretches are compositionally biased toward low complexity: residues 4496-4517 (STTS…SSTT) and 4529-4546 (SSPV…STTS). 2 repeat units span residues 4522–4540 (EEST…TPSP) and 4550–4568 (EEST…MHFP). Residues 4551–4571 (ESTTYHSSPGSTQTMHFPESN) show a composition bias toward polar residues. A glycan (N-linked (GlcNAc...) asparagine) is linked at N4571. Residues 4582-4600 (TSHSSTTHTISSAPSTTSA) show a composition bias toward low complexity. 2 stretches are compositionally biased toward polar residues: residues 4607 to 4622 (SYHS…HFPD) and 4651 to 4688 (RSTT…LSEK). 2 stretches are compositionally biased toward low complexity: residues 4689–4710 (STTF…SSTT) and 4722–4739 (SSPV…STTS). Tandem repeats lie at residues 4715–4733 (EEST…TPSP) and 4743–4761 (EEST…MHFP). Residues 4747 to 4768 (AYHSSPGSTQTMHFPESSTASG) show a composition bias toward polar residues. Residues 4776-4792 (SHSSTTHTISSPPSTTS) are compositionally biased toward low complexity. Composition is skewed to polar residues over residues 4800-4814 (SYHS…THFP) and 4887-4917 (SSRS…SQAE). The span at 4918-4931 (STHTTAFPASTTTS) shows a compositional bias: low complexity. Composition is skewed to polar residues over residues 4932-5024 (GLSQ…STPF) and 5048-5061 (STAF…TGTT). A compositionally biased stretch (low complexity) spans 5094-5112 (SSSTSGLTEESTTFHTSPS). An EGF-like domain is found at 5116 to 5154 (TIVSTESLETLAPGLCQEGQIWNGKQCVCPQGYVGYQCL). C5144 and C5153 are disulfide-bonded. An SEA domain is found at 5168 to 5275 (LNATLGMTVK…TRTTLLDPDS (108 aa)). N5169, N5182, N5197, N5228, and N5264 each carry an N-linked (GlcNAc...) asparagine glycan. A Cleavage motif motif is present at residues 5226 to 5233 (LLNGSIVV). A helical membrane pass occupies residues 5381-5401 (GIVGAVMAVLLLALIILIILF). The Cytoplasmic segment spans residues 5402 to 5478 (SLSQRKRHRE…QRPEMVASTV (77 aa)).

In terms of tissue distribution, ubiquitous, with higher expression in colon. Down-regulated in colorectal cancer as well as in the colon of patients with ulcerative colitis (UC) and Crohn's disease (CD).

The protein localises to the membrane. Functionally, involved in epithelial cell protection, adhesion modulation, and signaling. May be involved in epithelial cell growth regulation. Stimulated by both cytokine TNF-alpha and TGF-beta in intestinal epithelium. This is Mucin-12 (MUC12) from Homo sapiens (Human).